Consider the following 180-residue polypeptide: MLKLLSEIGPVIAFFAGFFYGGGIQSATLYMLITSIICITLCYIIDKKVSKLSIISSTVLFVSGIITLISGDSMYIKIKPTILYVIFGIIFLMSGIRKNPFIKYALESIVRLKEESWIILSYRTAAFFFFMAVVNEVVWRNFSDETWVKFKVFGVIPITFIFILLQLPLLLKNKLPDSKI.

Transmembrane regions (helical) follow at residues 4 to 24, 25 to 45, 49 to 69, 76 to 96, 118 to 138, and 150 to 170; these read LLSE…GGGI, QSAT…CYII, VSKL…ITLI, IKIK…MSGI, IILS…NEVV, and FKVF…LPLL.

This sequence belongs to the YciB family.

It is found in the cell inner membrane. In terms of biological role, plays a role in cell envelope biogenesis, maintenance of cell envelope integrity and membrane homeostasis. The polypeptide is Inner membrane-spanning protein YciB (Rickettsia typhi (strain ATCC VR-144 / Wilmington)).